Consider the following 161-residue polypeptide: Nucleotide-binding protein Daci_4781 (161 aa).

It belongs to the YajQ family.

In terms of biological role, nucleotide-binding protein. This Delftia acidovorans (strain DSM 14801 / SPH-1) protein is Nucleotide-binding protein Daci_4781.